The following is a 196-amino-acid chain: GTP cyclohydrolase-2 (196 aa).

R49–E53 contributes to the GTP binding site. 3 residues coordinate Zn(2+): C54, C65, and C67. GTP is bound by residues Q70, E92 to R94, and T114. D126 functions as the Proton acceptor in the catalytic mechanism. The Nucleophile role is filled by R128. Residues T149 and K154 each contribute to the GTP site.

This sequence belongs to the GTP cyclohydrolase II family. Homodimer. It depends on Zn(2+) as a cofactor.

The catalysed reaction is GTP + 4 H2O = 2,5-diamino-6-hydroxy-4-(5-phosphoribosylamino)-pyrimidine + formate + 2 phosphate + 3 H(+). It functions in the pathway cofactor biosynthesis; riboflavin biosynthesis; 5-amino-6-(D-ribitylamino)uracil from GTP: step 1/4. Its function is as follows. Catalyzes the conversion of GTP to 2,5-diamino-6-ribosylamino-4(3H)-pyrimidinone 5'-phosphate (DARP), formate and pyrophosphate. This is GTP cyclohydrolase-2 from Escherichia coli O45:K1 (strain S88 / ExPEC).